The primary structure comprises 320 residues: Olfactory receptor 52N1 (320 aa).

Over 1 to 27 (MSFLNGTSLTPASFILNGIPGLEDVHL) the chain is Extracellular. Asn-5 carries an N-linked (GlcNAc...) asparagine glycan. Residues 28–48 (WISFPLCTMYSIAITGNFGLM) traverse the membrane as a helical segment. Topologically, residues 49 to 56 (YLIYCDEA) are cytoplasmic. The chain crosses the membrane as a helical span at residues 57–77 (LHRPMYVFLALLSFTDVLMCT). Residues 78–101 (STLPNTLFILWFNLKEIDFKACLA) lie on the Extracellular side of the membrane. The cysteines at positions 99 and 191 are disulfide-linked. A helical transmembrane segment spans residues 102–122 (QMFFVHTFTGMESGVLMLMAL). Residues 123 to 141 (DHCVAICFPLRYATILTNS) lie on the Cytoplasmic side of the membrane. The helical transmembrane segment at 142-162 (VIAKAGFLTFLRGVMLVIPST) threads the bilayer. Topologically, residues 163–198 (FLTKRLPYCKGNVIPHTYCDHMSVAKISCGNVRVNA) are extracellular. The helical transmembrane segment at 199-219 (IYGLIVALLIGGFDILCITIS) threads the bilayer. The Cytoplasmic segment spans residues 220 to 239 (YTMILQAVVSLSSADARQKA). Residues 240-260 (FSTCTAHFCAIVLTYVPAFFT) form a helical membrane-spanning segment. The Extracellular segment spans residues 261–276 (FFTHHFGGHTIPLHIH). Residues 277–297 (IIMANLYLLMPPTMNPIVYGV) form a helical membrane-spanning segment. Topologically, residues 298–320 (KTRQVRESVIRFFLKGKDNSHNF) are cytoplasmic.

The protein belongs to the G-protein coupled receptor 1 family.

The protein localises to the cell membrane. Functionally, odorant receptor. This chain is Olfactory receptor 52N1 (OR52N1), found in Homo sapiens (Human).